Consider the following 650-residue polypeptide: Acetyl-coenzyme A synthetase (650 aa).

Residues 191–194 (RGGR), threonine 311, and asparagine 335 each bind CoA. Residues 387-389 (GEP), 411-416 (DTWWQT), aspartate 500, and arginine 515 contribute to the ATP site. Serine 523 is a CoA binding site. ATP is bound at residue arginine 526. Mg(2+) is bound by residues valine 537, histidine 539, and valine 542. Arginine 584 contacts CoA. Position 609 is an N6-acetyllysine (lysine 609).

Belongs to the ATP-dependent AMP-binding enzyme family. The cofactor is Mg(2+). Post-translationally, acetylated. Deacetylation by the SIR2-homolog deacetylase activates the enzyme.

The enzyme catalyses acetate + ATP + CoA = acetyl-CoA + AMP + diphosphate. Functionally, catalyzes the conversion of acetate into acetyl-CoA (AcCoA), an essential intermediate at the junction of anabolic and catabolic pathways. AcsA undergoes a two-step reaction. In the first half reaction, AcsA combines acetate with ATP to form acetyl-adenylate (AcAMP) intermediate. In the second half reaction, it can then transfer the acetyl group from AcAMP to the sulfhydryl group of CoA, forming the product AcCoA. This is Acetyl-coenzyme A synthetase from Shewanella sediminis (strain HAW-EB3).